A 95-amino-acid polypeptide reads, in one-letter code: Secretoglobin family 2A member 1 (95 aa).

An N-terminal signal peptide occupies residues 1–18 (MKLVFLFLLVTIPICCYA). Residues asparagine 35 and asparagine 72 are each glycosylated (N-linked (GlcNAc...) asparagine).

This sequence belongs to the secretoglobin family. Lipophilin subfamily. Prostatein is composed of three different peptides called C1, C2 and C3. These form covalent C1:C3 (F) and C2:C3 (S) heterodimers whose non-covalent association forms tetrameric (C1:C3/C3:C2) prostatein molecules. In terms of tissue distribution, expressed at very low level in ventral prostate.

The protein localises to the secreted. Part of prostatein which is the major secretory glycoprotein of ventral prostate gland. Steroid-binding protein; can bind non-polar steroids, cholesterol and a group of small proline-rich peptides. The chain is Secretoglobin family 2A member 1 from Rattus norvegicus (Rat).